The following is a 214-amino-acid chain: Putative archaetidylserine decarboxylase proenzyme (214 aa).

Serine 180 (schiff-base intermediate with substrate; via pyruvic acid) is an active-site residue. Serine 180 carries the pyruvic acid (Ser); by autocatalysis modification.

The protein belongs to the phosphatidylserine decarboxylase family. PSD-A subfamily. In terms of assembly, heterodimer of a large membrane-associated beta subunit and a small pyruvoyl-containing alpha subunit. The cofactor is pyruvate. In terms of processing, is synthesized initially as an inactive proenzyme. Formation of the active enzyme involves a self-maturation process in which the active site pyruvoyl group is generated from an internal serine residue via an autocatalytic post-translational modification. Two non-identical subunits are generated from the proenzyme in this reaction, and the pyruvate is formed at the N-terminus of the alpha chain, which is derived from the carboxyl end of the proenzyme. The post-translation cleavage follows an unusual pathway, termed non-hydrolytic serinolysis, in which the side chain hydroxyl group of the serine supplies its oxygen atom to form the C-terminus of the beta chain, while the remainder of the serine residue undergoes an oxidative deamination to produce ammonia and the pyruvoyl prosthetic group on the alpha chain.

It localises to the cell membrane. The catalysed reaction is archaetidylserine + H(+) = archaetidylethanolamine + CO2. Its function is as follows. Catalyzes the formation of archaetidylethanolamine (PtdEtn) from archaetidylserine (PtdSer). This is Putative archaetidylserine decarboxylase proenzyme from Methanopyrus kandleri (strain AV19 / DSM 6324 / JCM 9639 / NBRC 100938).